A 641-amino-acid chain; its full sequence is YAP1-binding protein 2 (641 aa).

The protein belongs to the YBP1 family.

The protein resides in the cytoplasm. Its function is as follows. Involved in oxidative stress response and redox homeostasis. Required for hydrogen peroxide-induced activation of YAP1. Acts in a parallele pathway to YBP1. This Saccharomyces cerevisiae (strain ATCC 204508 / S288c) (Baker's yeast) protein is YAP1-binding protein 2.